Reading from the N-terminus, the 539-residue chain is Protein Wnt-4 (539 aa).

The signal sequence occupies residues M1–G21. The disordered stretch occupies residues Q34–I77. Low complexity predominate over residues Q51–N74. N-linked (GlcNAc...) asparagine glycosylation is found at N74 and N284. 5 disulfide bridges follow: C274-C285, C322-C330, C332-C349, C397-C411, and C399-C406. S403 is lipidated: O-palmitoleoyl serine; by PORCN. The N-linked (GlcNAc...) asparagine glycan is linked to N419. The interval A436 to S463 is disordered. The segment covering Q439 to S448 has biased composition (low complexity). The segment covering R449–P460 has biased composition (basic residues). Intrachain disulfides connect C478–C497, C486–C492, C496–C538, C512–C529, C514–C526, and C521–C522.

Belongs to the Wnt family. Palmitoleoylated by porcupine. The lipid group functions as a sorting signal, targeting the ligand to polarized vesicles that transport Wnt4 to unique sites at the cell surface. Depalmitoleoylated by notum, leading to inhibit Wnt signaling pathway.

The protein resides in the secreted. Its subcellular location is the extracellular space. It is found in the extracellular matrix. In terms of biological role, binds as a ligand to a family of frizzled seven-transmembrane receptors and acts through a cascade of genes on the nucleus. Acts downstream of homeotic complex genes in the visceral mesoderm and is required for embryonic segmentation. Also required for cell movement and FAK regulation during ovarian morphogenesis. In Drosophila melanogaster (Fruit fly), this protein is Protein Wnt-4 (Wnt4).